A 122-amino-acid chain; its full sequence is Piercer of microtubule wall 2 protein (122 aa).

The segment covering 1-23 has biased composition (basic and acidic residues); the sequence is MARETDCDLDKKTSLTSDAEMRP. Disordered regions lie at residues 1 to 26 and 99 to 122; these read MARE…PEPP and QNNS…QHTL. Residues 113 to 122 are compositionally biased toward polar residues; the sequence is IDSPNYQHTL.

Belongs to the PIERCE2 family. Microtubule inner protein component of sperm flagellar doublet microtubules. Interacts with CFAP53, ODAD1 and ODAD3; the interactions link the outer dynein arms docking complex (ODA-DC) to the internal microtubule inner proteins (MIP) in cilium axoneme.

Its subcellular location is the cytoplasm. The protein resides in the cytoskeleton. The protein localises to the cilium axoneme. It localises to the flagellum axoneme. Microtubule inner protein involved in the attachment of outer dynein arms (ODAs) to dynein-decorated doublet microtubules (DMTs) in cilia axoneme, which is required for motile cilia beating. This chain is Piercer of microtubule wall 2 protein, found in Mus musculus (Mouse).